The primary structure comprises 94 residues: Small ribosomal subunit protein uS19 (94 aa).

Belongs to the universal ribosomal protein uS19 family.

In terms of biological role, protein S19 forms a complex with S13 that binds strongly to the 16S ribosomal RNA. The protein is Small ribosomal subunit protein uS19 of Acetivibrio thermocellus (strain ATCC 27405 / DSM 1237 / JCM 9322 / NBRC 103400 / NCIMB 10682 / NRRL B-4536 / VPI 7372) (Clostridium thermocellum).